Reading from the N-terminus, the 362-residue chain is Cytoskeleton protein RodZ (362 aa).

Residues 1 to 111 (MNTEASQDQT…LGKKHKKRDG (111 aa)) lie on the Cytoplasmic side of the membrane. In terms of domain architecture, HTH cro/C1-type spans 19–79 (LRQARESLGL…KLVHLPEDEL (61 aa)). A DNA-binding region (H-T-H motif) is located at residues 30-49 (QQTVAERLCLKVSTIRDIEE). Residues 112 to 132 (WLMSFTWLIVLVVLGLTGAWW) traverse the membrane as a helical; Signal-anchor for type II membrane protein segment. The Periplasmic portion of the chain corresponds to 133–362 (WQNHQAQQAE…RVARLTVGVE (230 aa)). The disordered stretch occupies residues 151–277 (SAQLSQNGGQ…LPTADAGVSG (127 aa)). Low complexity predominate over residues 193–221 (STSAVTNSATTSSATTSSVPTTSSVPKTT). The segment covering 223 to 242 (VPKTNSTEPVDTANTNTTMH) has biased composition (polar residues). Positions 246–259 (AASAAVSPSQVPQP) are enriched in low complexity.

The protein belongs to the RodZ family.

The protein resides in the cell inner membrane. Its function is as follows. Cytoskeletal protein that is involved in cell-shape control through regulation of the length of the long axis. This chain is Cytoskeleton protein RodZ, found in Yersinia pseudotuberculosis serotype IB (strain PB1/+).